Consider the following 62-residue polypeptide: Double zinc ribbon protein TK0111 (62 aa).

Positions 13, 16, 31, 34, 42, 45, 54, and 57 each coordinate Zn(2+).

Crystallized in association with 70S ribosomes. It depends on Zn(2+) as a cofactor.

This is Double zinc ribbon protein TK0111 from Thermococcus kodakarensis (strain ATCC BAA-918 / JCM 12380 / KOD1) (Pyrococcus kodakaraensis (strain KOD1)).